The chain runs to 473 residues: Ribulose bisphosphate carboxylase large chain (473 aa).

Substrate-binding residues include Asn-116 and Thr-166. Lys-168 acts as the Proton acceptor in catalysis. Lys-170 is a substrate binding site. Lys-194, Asp-196, and Glu-197 together coordinate Mg(2+). Residue Lys-194 is modified to N6-carboxylysine. His-287 serves as the catalytic Proton acceptor. Substrate-binding residues include Arg-288, His-320, and Ser-372.

It belongs to the RuBisCO large chain family. Type I subfamily. Heterohexadecamer of 8 large chains and 8 small chains. Mg(2+) is required as a cofactor.

The catalysed reaction is 2 (2R)-3-phosphoglycerate + 2 H(+) = D-ribulose 1,5-bisphosphate + CO2 + H2O. It catalyses the reaction D-ribulose 1,5-bisphosphate + O2 = 2-phosphoglycolate + (2R)-3-phosphoglycerate + 2 H(+). Its function is as follows. RuBisCO catalyzes two reactions: the carboxylation of D-ribulose 1,5-bisphosphate, the primary event in carbon dioxide fixation, as well as the oxidative fragmentation of the pentose substrate. Both reactions occur simultaneously and in competition at the same active site. The polypeptide is Ribulose bisphosphate carboxylase large chain (Halorhodospira halophila (strain DSM 244 / SL1) (Ectothiorhodospira halophila (strain DSM 244 / SL1))).